We begin with the raw amino-acid sequence, 333 residues long: MNISTMNLDQELAEIRASSSDHTNYFYSSERREHMFDKVLTPSDVGKLNRLVIPKQHAENFFPLEDNQNGTVLDFQDKNGKMWRFRYSYWNSSQSYVMTKGWSRFVKEKKLFAGDTVSFYRGYIPDDNAQPERRRKIMFIDWRPRAEINFVHNINNHNFVFGSPTYPTARFYPVTPEYSMPYRSFPPFYQNQFQEREYLGYGYGRVVNGNGVRYYAGSPLDQHHQWNLGRSEPLVYDSVPVFPAGRVPPSAPPQPSTTKKLRLFGVDVEESSSSGDTRGEMGVAGYSSSSPVVIRDDDQSFWRSPRGEMASSSSAMQLSDDEEYKRKGKSLEL.

The segment at residues 36-145 is a DNA-binding region (TF-B3); sequence FDKVLTPSDV…KIMFIDWRPR (110 aa). The segment at 268–333 is disordered; it reads VEESSSSGDT…YKRKGKSLEL (66 aa). Positions 323–333 are enriched in basic and acidic residues; it reads EYKRKGKSLEL.

Its subcellular location is the nucleus. Its function is as follows. Regulates lateral organ growth. Functionally redundant with NGA1, NGA2 and NGA3. This chain is B3 domain-containing transcription factor NGA4 (NGA4), found in Arabidopsis thaliana (Mouse-ear cress).